We begin with the raw amino-acid sequence, 421 residues long: Putative hydro-lyase KRH_21160 (421 aa).

Disordered regions lie at residues threonine 200 to threonine 298 and threonine 312 to arginine 421. Residues glycine 224–arginine 237 show a composition bias toward basic residues. Composition is skewed to low complexity over residues proline 243–proline 260 and serine 370–alanine 380.

The protein belongs to the D-glutamate cyclase family.

In Kocuria rhizophila (strain ATCC 9341 / DSM 348 / NBRC 103217 / DC2201), this protein is Putative hydro-lyase KRH_21160.